Consider the following 88-residue polypeptide: Putative membrane protein insertion efficiency factor (88 aa).

This sequence belongs to the UPF0161 family.

It localises to the cell inner membrane. Its function is as follows. Could be involved in insertion of integral membrane proteins into the membrane. The chain is Putative membrane protein insertion efficiency factor from Coxiella burnetii (strain Dugway 5J108-111).